We begin with the raw amino-acid sequence, 224 residues long: uncharacterized protein (224 aa).

The 220-residue stretch at 2 to 221 (IEAKNVWKIY…KLRDGEIVEI (220 aa)) folds into the ABC transporter domain. ATP is bound at residue 38–45 (GPSGCGKS).

Belongs to the ABC transporter superfamily.

This is an uncharacterized protein from Methanocaldococcus jannaschii (strain ATCC 43067 / DSM 2661 / JAL-1 / JCM 10045 / NBRC 100440) (Methanococcus jannaschii).